The following is a 238-amino-acid chain: Ribosomal RNA small subunit methyltransferase G (238 aa).

S-adenosyl-L-methionine contacts are provided by residues G80, 131-132 (AE), and R148.

Belongs to the methyltransferase superfamily. RNA methyltransferase RsmG family.

The protein resides in the cytoplasm. In terms of biological role, specifically methylates the N7 position of a guanine in 16S rRNA. The protein is Ribosomal RNA small subunit methyltransferase G of Thermotoga maritima (strain ATCC 43589 / DSM 3109 / JCM 10099 / NBRC 100826 / MSB8).